Reading from the N-terminus, the 404-residue chain is Tryptophan synthase beta chain (404 aa).

An N6-(pyridoxal phosphate)lysine modification is found at Lys90.

The protein belongs to the TrpB family. Tetramer of two alpha and two beta chains. It depends on pyridoxal 5'-phosphate as a cofactor.

The enzyme catalyses (1S,2R)-1-C-(indol-3-yl)glycerol 3-phosphate + L-serine = D-glyceraldehyde 3-phosphate + L-tryptophan + H2O. It functions in the pathway amino-acid biosynthesis; L-tryptophan biosynthesis; L-tryptophan from chorismate: step 5/5. The beta subunit is responsible for the synthesis of L-tryptophan from indole and L-serine. The polypeptide is Tryptophan synthase beta chain (Geobacillus thermodenitrificans (strain NG80-2)).